Here is a 612-residue protein sequence, read N- to C-terminus: Dihydroxy-acid dehydratase (612 aa).

Asp-81 is a binding site for Mg(2+). Cys-122 lines the [2Fe-2S] cluster pocket. Residues Asp-123 and Lys-124 each coordinate Mg(2+). N6-carboxylysine is present on Lys-124. Residue Cys-195 participates in [2Fe-2S] cluster binding. Position 491 (Glu-491) interacts with Mg(2+). The active-site Proton acceptor is the Ser-517.

It belongs to the IlvD/Edd family. In terms of assembly, homodimer. [2Fe-2S] cluster is required as a cofactor. Requires Mg(2+) as cofactor.

The enzyme catalyses (2R)-2,3-dihydroxy-3-methylbutanoate = 3-methyl-2-oxobutanoate + H2O. The catalysed reaction is (2R,3R)-2,3-dihydroxy-3-methylpentanoate = (S)-3-methyl-2-oxopentanoate + H2O. It participates in amino-acid biosynthesis; L-isoleucine biosynthesis; L-isoleucine from 2-oxobutanoate: step 3/4. The protein operates within amino-acid biosynthesis; L-valine biosynthesis; L-valine from pyruvate: step 3/4. Functionally, functions in the biosynthesis of branched-chain amino acids. Catalyzes the dehydration of (2R,3R)-2,3-dihydroxy-3-methylpentanoate (2,3-dihydroxy-3-methylvalerate) into 2-oxo-3-methylpentanoate (2-oxo-3-methylvalerate) and of (2R)-2,3-dihydroxy-3-methylbutanoate (2,3-dihydroxyisovalerate) into 2-oxo-3-methylbutanoate (2-oxoisovalerate), the penultimate precursor to L-isoleucine and L-valine, respectively. In Bartonella tribocorum (strain CIP 105476 / IBS 506), this protein is Dihydroxy-acid dehydratase.